The chain runs to 568 residues: Glycine--tRNA ligase (568 aa).

Arg-97 and Glu-163 together coordinate substrate. ATP is bound by residues 195-197, 205-210, 322-323, and 441-444; these read RNE, IRLREF, EC, and GIDR. Residue 210–214 participates in substrate binding; the sequence is FTQAE. Residue 437-441 coordinates substrate; the sequence is EPSFG.

Belongs to the class-II aminoacyl-tRNA synthetase family.

The protein resides in the cytoplasm. The catalysed reaction is tRNA(Gly) + glycine + ATP = glycyl-tRNA(Gly) + AMP + diphosphate. Functionally, catalyzes the attachment of glycine to tRNA(Gly). The polypeptide is Glycine--tRNA ligase (Pyrococcus furiosus (strain ATCC 43587 / DSM 3638 / JCM 8422 / Vc1)).